Consider the following 592-residue polypeptide: Laccase PFICI_06862 (592 aa).

The first 19 residues, 1–19 (MYIQTQFASLLLLAGTSLA), serve as a signal peptide directing secretion. N26 is a glycosylation site (N-linked (GlcNAc...) asparagine). 2 Plastocyanin-like domains span residues 32-142 (QWSS…WIAP) and 173-350 (VVIS…RYPG). Positions 78, 80, 123, and 125 each coordinate Cu cation. N-linked (GlcNAc...) asparagine glycosylation is found at N370, N407, and N454. The Plastocyanin-like 3 domain maps to 445-563 (SDVQGGSMQN…AGQQVVLLEG (119 aa)). A Cu cation-binding site is contributed by H475. N-linked (GlcNAc...) asparagine glycosylation is present at N524.

This sequence belongs to the multicopper oxidase family.

Its subcellular location is the cell surface. Its pathway is pigment biosynthesis; melanin biosynthesis. Laccase involved the biosynthesis of dihydroxynaphthalene (DHN)-melanin, a bluish-green pigment forming a dark layer in the conidial wall that protects the conidia from UV radiations. The first step of the pathway is the production of the pentaketide 1,3,6,8-tetrahydroxynaphthalene (1,3,6,8-THN or T4HN) by the polyketide synthase PfmaE though condensation of acetyl-CoA with malonyl-CoA. T4HN is not stable and easily oxidizes into the stable form flaviolin. T4HN is also substrate of the hydroxynaphthalene reductase PfmaG to yield scytalone. The scytalone dehydratase PfmaJ then reduces scytalone to 1,3,8-THN. 1,3,8-THN is then substrate of the hydroxynaphthalene reductase PfmaI to yield vermelone. Vermelone is further converted by the multicopper oxidase PfmaD to 1,8-DHN. Finally the laccase PFICI_06862 transforms 1,8-DHN to DHN-melanin. The roles of the 5-oxoprolinase PfmaA and the proline iminopeptidase PfmaB within the cluster have not been elucidated yet. In Pestalotiopsis fici (strain W106-1 / CGMCC3.15140), this protein is Laccase PFICI_06862.